The chain runs to 437 residues: Adenylosuccinate synthetase (437 aa).

Residues 12-18 (GDEGKGK) and 40-42 (GHT) contribute to the GTP site. Residue Asp13 is the Proton acceptor of the active site. Mg(2+) contacts are provided by Asp13 and Gly40. Residues 13–16 (DEGK), 38–41 (NAGH), Thr128, Arg142, Gln223, Thr238, and Arg302 contribute to the IMP site. Residue His41 is the Proton donor of the active site. 298–304 (TTTGRRR) serves as a coordination point for substrate. GTP contacts are provided by residues Arg304, 330-332 (KLD), and 412-414 (SLG).

It belongs to the adenylosuccinate synthetase family. Homodimer. The cofactor is Mg(2+).

The protein resides in the cytoplasm. The enzyme catalyses IMP + L-aspartate + GTP = N(6)-(1,2-dicarboxyethyl)-AMP + GDP + phosphate + 2 H(+). Its pathway is purine metabolism; AMP biosynthesis via de novo pathway; AMP from IMP: step 1/2. Its function is as follows. Plays an important role in the de novo pathway of purine nucleotide biosynthesis. Catalyzes the first committed step in the biosynthesis of AMP from IMP. The sequence is that of Adenylosuccinate synthetase from Prochlorococcus marinus (strain MIT 9313).